A 450-amino-acid polypeptide reads, in one-letter code: Interferon regulatory factor 4 (450 aa).

A DNA-binding region (IRF tryptophan pentad repeat) is located at residues 21 to 129 (NGKLRQWLID…DPYKVYRIVP (109 aa)). S446 and S447 each carry phosphoserine; by ROCK2.

Belongs to the IRF family. In terms of assembly, interacts with SPIB and DEF6. Interacts with the BATF-JUNB heterodimer. Interacts with BATF (via bZIP domain); the interaction is direct. Directly interacts with NLRP3 in the nucleus of Th2 cells; this interaction enhances IRF4 ability to bind to the IL4 promoter and is required for optimal IRF4-dependent IL4 transcription. Interacts with SPI1. In terms of processing, phosphorylation by ROCK2 regulates IL-17 and IL-21 production. In terms of tissue distribution, lymphoid cells.

It localises to the nucleus. Its subcellular location is the cytoplasm. Transcriptional activator. Binds to the interferon-stimulated response element (ISRE) of the MHC class I promoter. Binds the immunoglobulin lambda light chain enhancer, together with PU.1. Probably plays a role in ISRE-targeted signal transduction mechanisms specific to lymphoid cells. Involved in CD8(+) dendritic cell differentiation by forming a complex with the BATF-JUNB heterodimer in immune cells, leading to recognition of AICE sequence (5'-TGAnTCA/GAAA-3'), an immune-specific regulatory element, followed by cooperative binding of BATF and IRF4 and activation of genes. In Mus musculus (Mouse), this protein is Interferon regulatory factor 4.